Consider the following 474-residue polypeptide: Alginate biosynthesis protein AlgX (474 aa).

A signal peptide spans 1–26; it reads MKTRTSRLFRLSALAAGLCLAQAALA. The interval 27-347 is SGNH hydrolase-like domain; sequence ADPGAAPSYQ…QAMPLVDNGC (321 aa). Residues Cys44 and Cys229 are joined by a disulfide bond. Asp174 is a catalytic residue. The active-site Proton acceptor is the His176. The Nucleophile role is filled by Ser269. Cys347 and Cys460 form a disulfide bridge. The tract at residues 348 to 474 is CBM domain; the sequence is SGRKTVLSRK…AKASQSVAGR (127 aa).

The protein belongs to the AlgX family. Monomer. Interacts with AlgK and MucD.

It localises to the periplasm. Its pathway is glycan biosynthesis; alginate biosynthesis. Plays two roles in the biosynthesis of the exopolysaccharide alginate: protects alginate from degradation as the polymer traverses the periplasm, and also plays a role in its O-acetylation. Acetylation of alginate causes the cells in the biofilm to adhere better to lung epithelium, form microcolonies, and resist the effects of the host immune system and/or antibiotics. Displays a low acetylesterase activity in vitro using a pseudosubstrate, 3-carboxyumbelliferyl acetate. Probably has acetyltransferase activity in vivo. This is Alginate biosynthesis protein AlgX (algX) from Pseudomonas aeruginosa (strain ATCC 15692 / DSM 22644 / CIP 104116 / JCM 14847 / LMG 12228 / 1C / PRS 101 / PAO1).